A 968-amino-acid polypeptide reads, in one-letter code: RNA polymerase-associated protein RapA (968 aa).

Positions 164 to 334 constitute a Helicase ATP-binding domain; that stretch reads DVGRRHAPRV…FARLRLLDPN (171 aa). 177–184 contacts ATP; sequence DEVGLGKT. Positions 280–283 match the DEAH box motif; the sequence is DEAH. In terms of domain architecture, Helicase C-terminal spans 490–685; that stretch reads RVEWLMGYLT…ALKAQLEQGR (196 aa).

The protein belongs to the SNF2/RAD54 helicase family. RapA subfamily. Interacts with the RNAP. Has a higher affinity for the core RNAP than for the holoenzyme. Its ATPase activity is stimulated by binding to RNAP.

Transcription regulator that activates transcription by stimulating RNA polymerase (RNAP) recycling in case of stress conditions such as supercoiled DNA or high salt concentrations. Probably acts by releasing the RNAP, when it is trapped or immobilized on tightly supercoiled DNA. Does not activate transcription on linear DNA. Probably not involved in DNA repair. The polypeptide is RNA polymerase-associated protein RapA (Salmonella paratyphi C (strain RKS4594)).